The sequence spans 220 residues: Meiotic nuclear division protein 1 homolog (220 aa).

The stretch at 76–147 (SKALHARKRR…KVEIEKYQEC (72 aa)) forms a coiled coil.

The protein belongs to the MND1 family.

The protein localises to the nucleus. Functionally, required for proper homologous chromosome pairing and efficient cross-over and intragenic recombination during meiosis. Stimulates both DMC1- and RAD51-mediated homologous strand assimilation, which is required for the resolution of meiotic double-strand breaks. This Danio rerio (Zebrafish) protein is Meiotic nuclear division protein 1 homolog.